Consider the following 277-residue polypeptide: Putative phosphoenolpyruvate synthase regulatory protein (277 aa).

157 to 164 (GVSRCGKT) serves as a coordination point for ADP.

Belongs to the pyruvate, phosphate/water dikinase regulatory protein family. PSRP subfamily.

It catalyses the reaction [pyruvate, water dikinase] + ADP = [pyruvate, water dikinase]-phosphate + AMP + H(+). It carries out the reaction [pyruvate, water dikinase]-phosphate + phosphate + H(+) = [pyruvate, water dikinase] + diphosphate. In terms of biological role, bifunctional serine/threonine kinase and phosphorylase involved in the regulation of the phosphoenolpyruvate synthase (PEPS) by catalyzing its phosphorylation/dephosphorylation. The protein is Putative phosphoenolpyruvate synthase regulatory protein of Klebsiella pneumoniae subsp. pneumoniae (strain ATCC 700721 / MGH 78578).